The sequence spans 21 residues: Brevinin-2-related peptide (21 aa).

Residue Leu21 is modified to Leucine amide.

As to expression, expressed by the skin glands.

It localises to the secreted. Functionally, antimicrobial peptide with activity against Gram-negative and Gram-positive bacteria (MIC=13 uM against E.coli, MIC=25 uM against S.aureus) and fungi (MIC=25 uM against C.albicans). Also shows hemolytic activity (HC(50)=50 uM). In vitro, shows moderate inhibitory activity against HIV. This Lithobates septentrionalis (Mink frog) protein is Brevinin-2-related peptide.